Here is a 444-residue protein sequence, read N- to C-terminus: Protein CLP1 homolog (444 aa).

ATP is bound by residues glutamate 33, lysine 72, and 140–145; that span reads DSGKST.

Belongs to the Clp1 family. Clp1 subfamily. In terms of assembly, interacts with PCFS4 and SYM5. Forms a complex with cleavage and polyadenylation specificity factor (CPSF) subunits CPSF30, CPSF100, PCFS1, PCFS4, PCFS5, CPSF160 and FY.

It localises to the nucleus. Functionally, required for endonucleolytic cleavage during polyadenylation-dependent pre-mRNA 3'-end formation. Functions in gametophyte, embryo and postembryotic development. This is Protein CLP1 homolog (CLPS3) from Arabidopsis thaliana (Mouse-ear cress).